We begin with the raw amino-acid sequence, 790 residues long: Type VI secretion system spike protein VgrG5 (790 aa).

Basic and acidic residues-rich tracts occupy residues 753–763 (GFRDYRAEMPQ) and 772–790 (AYRRDASRPGAADKDEPTP). Residues 753-790 (GFRDYRAEMPQHKPRSAPDAYRRDASRPGAADKDEPTP) form a disordered region.

The protein belongs to the VgrG protein family.

Its subcellular location is the secreted. Its function is as follows. Part of the H2 type VI secretion system (H2-T6SS) specialized secretion system, which delivers several virulence factors in both prokaryotic and eukaryotic cells during infection. Allows the delivery of the phospholipase effector PldB to target cells where it exerts its toxicity. Also plays a role in VgrG4b and its effector PldA secretion. The chain is Type VI secretion system spike protein VgrG5 from Pseudomonas aeruginosa (strain ATCC 15692 / DSM 22644 / CIP 104116 / JCM 14847 / LMG 12228 / 1C / PRS 101 / PAO1).